The sequence spans 334 residues: ADP-L-glycero-D-manno-heptose-6-epimerase (334 aa).

Residues 11–12 (FI), 32–33 (DN), Lys39, Lys54, 77–81 (QGACS), and Asn94 contribute to the NADP(+) site. Residue Tyr141 is the Proton acceptor of the active site. Lys145 serves as a coordination point for NADP(+). Asn171 lines the substrate pocket. NADP(+) is bound by residues Val172 and Lys180. Lys180 serves as the catalytic Proton acceptor. Substrate contacts are provided by residues Arg182, His189, 203-206 (FGSN), Arg216, and Tyr295.

The protein belongs to the NAD(P)-dependent epimerase/dehydratase family. HldD subfamily. In terms of assembly, homopentamer. The cofactor is NADP(+).

It catalyses the reaction ADP-D-glycero-beta-D-manno-heptose = ADP-L-glycero-beta-D-manno-heptose. The protein operates within nucleotide-sugar biosynthesis; ADP-L-glycero-beta-D-manno-heptose biosynthesis; ADP-L-glycero-beta-D-manno-heptose from D-glycero-beta-D-manno-heptose 7-phosphate: step 4/4. Its function is as follows. Catalyzes the interconversion between ADP-D-glycero-beta-D-manno-heptose and ADP-L-glycero-beta-D-manno-heptose via an epimerization at carbon 6 of the heptose. This chain is ADP-L-glycero-D-manno-heptose-6-epimerase, found in Neisseria gonorrhoeae (strain ATCC 700825 / FA 1090).